We begin with the raw amino-acid sequence, 442 residues long: Protein PRRC1-B (442 aa).

The disordered stretch occupies residues 1-24 (MMEESGIETTPPSTPPPSTIGTSV).

Belongs to the PRRC1 family.

It localises to the golgi apparatus. This is Protein PRRC1-B (prrc1-b) from Xenopus laevis (African clawed frog).